Reading from the N-terminus, the 175-residue chain is uncharacterized protein (175 aa).

Positions 1–173 (MYKNIIKLIS…VYKEKYKKLL (173 aa)) constitute a Macro domain.

Belongs to the MacroD-type family.

This is an uncharacterized protein from Fusobacterium nucleatum subsp. nucleatum (strain ATCC 25586 / DSM 15643 / BCRC 10681 / CIP 101130 / JCM 8532 / KCTC 2640 / LMG 13131 / VPI 4355).